The sequence spans 326 residues: L-threo-3-hydroxyaspartate ammonia-lyase (326 aa).

N6-(pyridoxal phosphate)lysine is present on Lys-53. Pyridoxal 5'-phosphate contacts are provided by residues Asn-80, 179–183 (GGGGL), and Ser-304.

It belongs to the serine/threonine dehydratase family. In terms of assembly, monomer. Pyridoxal 5'-phosphate is required as a cofactor. The cofactor is Mn(2+). Requires Mg(2+) as cofactor. It depends on Ca(2+) as a cofactor.

It catalyses the reaction (3S)-3-hydroxy-L-aspartate = oxaloacetate + NH4(+). With respect to regulation, is strongly inhibited by hydroxylamine and EDTA in vitro. Its function is as follows. Catalyzes the deamination of L-threo-3-hydroxyaspartate to oxaloacetate and ammonia. Shows a high specificity towards L-threo-3-hydroxyaspartate as other 3-hydroxyaminoacids, i.e. D,L-erythro- and D-threo-3-hydroxyaspartate, D-threonine, L-threonine, D,L-allothreonine, D-serine, and L-serine, are not substrates for this enzyme. Exhibits no detectable serine racemase activity. Is responsible for the 3-hydroxyaspartate resistance of S.cerevisiae, and thus may be involved in the detoxification of naturally occurring 3-hydroxyaspartate. This is L-threo-3-hydroxyaspartate ammonia-lyase (SRY1) from Saccharomyces cerevisiae (strain ATCC 204508 / S288c) (Baker's yeast).